A 174-amino-acid chain; its full sequence is Methylamine utilization protein MauL (174 aa).

It participates in one-carbon metabolism; methylamine degradation. Probably involved in TTQ prosthetic group biosynthesis. In Methylophilus methylotrophus (Bacterium W3A1), this protein is Methylamine utilization protein MauL (mauL).